A 380-amino-acid polypeptide reads, in one-letter code: Probable transposase for insertion sequence element IS701 (380 aa).

Functionally, involved in the transposition of the insertion sequence. The protein is Probable transposase for insertion sequence element IS701 of Microchaete diplosiphon (Fremyella diplosiphon).